Consider the following 2151-residue polypeptide: Polycystin-1-like protein 3 (2151 aa).

The first 20 residues, 1–20, serve as a signal peptide directing secretion; the sequence is MLLQRRSWLWLYIRIGVILG. Residues 25 to 1073 are Extracellular-facing; the sequence is RKPSIREQHG…IKLLLHVTNN (1049 aa). The 109-residue stretch at 34 to 142 folds into the C-type lectin domain; that stretch reads GGNSCYQLNR…CIEKHHFICQ (109 aa). 2 disulfides stabilise this stretch: C55–C141 and C116–C133. A glycan (N-linked (GlcNAc...) asparagine) is linked at N89. Over residues 222–245 the composition is skewed to polar residues; the sequence is SLTGRPQVTSDTLASSSPPQGTSD. The tract at residues 222–609 is disordered; that stretch reads SLTGRPQVTS…SSSPPWPVIT (388 aa). A compositionally biased stretch (low complexity) spans 246-348; the sequence is TPASSSPPQV…ASSSPPQGTS (103 aa). Polar residues-rich tracts occupy residues 349–363 and 371–600; these read DTPA…TLDT and QGTS…TPAS. N-linked (GlcNAc...) asparagine glycans are attached at residues N566, N579, N592, N913, and N951. The 163-residue stretch at 899–1061 folds into the GAIN-B domain; it reads TSLNTSTDHF…FIVPRTVDVE (163 aa). Cystine bridges form between C1011/C1039 and C1026/C1041. The tract at residues 1011–1061 is GPS; the sequence is CYFWDRYNRTWKSDGCQVGPKSTILKTQCLCDHLTFFSSDFFIVPRTVDVE. The interval 1045–1061 is stachel; it reads TFFSSDFFIVPRTVDVE. The chain crosses the membrane as a helical span at residues 1074–1094; sequence PVGVSLLSSLLGFYILLAMWA. Topologically, residues 1095–1283 are cytoplasmic; that stretch reads SRKDREDMQK…NQFTRVQRLS (189 aa). Residues 1119–1236 enclose the PLAT domain; the sequence is SHYLIQVYTG…GNCERDRVFT (118 aa). The helical transmembrane segment at 1284–1304 threads the bilayer; it reads CCMALLLCDMVINIMFWKMGG. The Extracellular portion of the chain corresponds to 1305 to 1320; the sequence is TTAKRGTEQLGPLAVT. Residues 1321-1341 traverse the membrane as a helical segment; sequence LSELLVSIQTSIILFPIHLIF. Residues 1342–1533 are Cytoplasmic-facing; that stretch reads GRLFQLIHPP…FCLFRWLKCS (192 aa). A helical membrane pass occupies residues 1534-1554; that stretch reads CWLLLGVISLASAFFITLYSL. Residues 1555-1575 are Extracellular-facing; the sequence is ELDKDQATSWVISMMLSVLQD. The chain crosses the membrane as a helical span at residues 1576–1596; the sequence is IFISQPIKVIFLTLLFSLMAN. Over 1597–1665 the chain is Cytoplasmic; the sequence is HMPWLNKDKE…KLTGGTLVQI (69 aa). A helical membrane pass occupies residues 1666 to 1676; sequence LFLTLLMTTVY. Residues 1677–1892 are Extracellular-facing; that stretch reads SAKDSSRFFL…SLTSLQSSER (216 aa). 2 N-linked (GlcNAc) asparagine glycosylation sites follow: N1712 and N1822. A helical membrane pass occupies residues 1893–1921; it reads GFAWIVSQVVYYLLVCYYAFIQGCRLKRQ. The Cytoplasmic portion of the chain corresponds to 1922–1930; the sequence is RLAFFTRKR. A helical transmembrane segment spans residues 1931–1949; that stretch reads NLLDTSIVLISFSILGLSM. Residues 1950-1980 lie on the Extracellular side of the membrane; that stretch reads QSLSLLHKKMQQYHCDRDRFISFYEALRVNS. Residues 1981–2002 traverse the membrane as a helical segment; the sequence is AVTHLRGFLLLFATVRVWDLLR. Over 2003–2019 the chain is Cytoplasmic; sequence HHAQLQVINKTLSKAWD. Residues 2020 to 2044 form a helical membrane-spanning segment; sequence EVLGFILIIVVLLSSYAMTFNLLFG. The tract at residues 2043–2081 is channel pore-region; it reads FGWSISDYQSFFRSIVTVVGLLMGTSKHKEVIALYPILG. The Extracellular segment spans residues 2045 to 2077; that stretch reads WSISDYQSFFRSIVTVVGLLMGTSKHKEVIALY. A helical transmembrane segment spans residues 2078 to 2097; it reads PILGSLLVLSSIILMGLVII. At 2098 to 2151 the chain is on the cytoplasmic side; that stretch reads NLFVSAILIAFGKERKACEKEATLTDMLLQKLSSLLGIRLHQNPSEEHADNTGY.

It belongs to the polycystin family. In terms of assembly, heterotetramer with PKD2L1, composed of 3 subunit of PKD2L1 and 1 subunit of PKD1L3. Autoproteolytically processed at the GPS region of the GAIN-B domain; this cleavage modulates receptor activity. Expressed in a subset of taste receptor cells (type III taste cells) distinct from those involved in bitter, sweet and umami taste. Expressed in circumvallate and foliate taste buds, but not in surrounding non-gustatory lingual epithelium cells. Expressed in testis.

The protein resides in the cell membrane. It carries out the reaction Ca(2+)(in) = Ca(2+)(out). It catalyses the reaction Na(+)(in) = Na(+)(out). The enzyme catalyses K(+)(in) = K(+)(out). The catalysed reaction is Mg(2+)(in) = Mg(2+)(out). The non-selective cation channel is gated following an off-response property by acid: gated open after the removal of acid stimulus, but not during acid application. Non-selective cation channel activity is inhibited by capsaicin. Regulation of non-selective cation channel activity by external Ca(2+) is bimodal, first sensitizing and subsequently inactivating the current. The apo (closed) heterotetramer has an asymmetric selectivity filter (SF) guarded by Lys-2069 in absence of Ca(2+). However, Ca(2+)-entrance to the SF vestibule is accompanied by a swing motion of Lys-2069 on PKD1L3. Functionally, pore-forming subunit of a heterotetrameric, non-selective cation channel that is permeable to Ca(2+). Also shows permeability towards NA(1+), K(+) and Mg(2+). Heterotetrameric complex channel is activated by external low pH and Ca(2+), but opens only when the extracellular pH rises again and after the removal of acid stimulus. May act as a sour taste receptor in gustatory cells; however, its contribution to sour taste perception is unclear in vivo and may be indirect. This is Polycystin-1-like protein 3 from Mus musculus (Mouse).